The chain runs to 300 residues: Dihydroorotate dehydrogenase B (NAD(+)), catalytic subunit (300 aa).

Residues Ser20 and 44–45 (KG) each bind FMN. Substrate is bound by residues Lys44 and 68–72 (NSVGL). Residues Asn98 and Asn124 each coordinate FMN. Residue Asn124 participates in substrate binding. Cys127 functions as the Nucleophile in the catalytic mechanism. FMN is bound by residues Lys162 and Ile188. 189–190 (NT) contributes to the substrate binding site. Residues Gly214, 240–241 (GG), and 262–263 (GT) each bind FMN.

It belongs to the dihydroorotate dehydrogenase family. Type 1 subfamily. Heterotetramer of 2 PyrK and 2 PyrD type B subunits. FMN is required as a cofactor.

Its subcellular location is the cytoplasm. The enzyme catalyses (S)-dihydroorotate + NAD(+) = orotate + NADH + H(+). Its pathway is pyrimidine metabolism; UMP biosynthesis via de novo pathway; orotate from (S)-dihydroorotate (NAD(+) route): step 1/1. In terms of biological role, catalyzes the conversion of dihydroorotate to orotate with NAD(+) as electron acceptor. The chain is Dihydroorotate dehydrogenase B (NAD(+)), catalytic subunit (pyrD) from Caldicellulosiruptor saccharolyticus (strain ATCC 43494 / DSM 8903 / Tp8T 6331).